Here is a 483-residue protein sequence, read N- to C-terminus: 3-isopropylmalate dehydratase large subunit (483 aa).

[4Fe-4S] cluster-binding residues include Cys-361, Cys-424, and Cys-427.

It belongs to the aconitase/IPM isomerase family. LeuC type 1 subfamily. In terms of assembly, heterodimer of LeuC and LeuD. [4Fe-4S] cluster is required as a cofactor.

It carries out the reaction (2R,3S)-3-isopropylmalate = (2S)-2-isopropylmalate. The protein operates within amino-acid biosynthesis; L-leucine biosynthesis; L-leucine from 3-methyl-2-oxobutanoate: step 2/4. Functionally, catalyzes the isomerization between 2-isopropylmalate and 3-isopropylmalate, via the formation of 2-isopropylmaleate. This chain is 3-isopropylmalate dehydratase large subunit, found in Polaromonas naphthalenivorans (strain CJ2).